We begin with the raw amino-acid sequence, 115 residues long: NADH-ubiquinone oxidoreductase chain 3 (115 aa).

Transmembrane regions (helical) follow at residues 3–23 (FVLA…ITFW), 55–75 (FFLV…LLPL), and 84–104 (LPLM…GLTY).

This sequence belongs to the complex I subunit 3 family. Core subunit of respiratory chain NADH dehydrogenase (Complex I) which is composed of 45 different subunits. Interacts with TMEM186. Interacts with TMEM242.

It is found in the mitochondrion inner membrane. The enzyme catalyses a ubiquinone + NADH + 5 H(+)(in) = a ubiquinol + NAD(+) + 4 H(+)(out). Functionally, core subunit of the mitochondrial membrane respiratory chain NADH dehydrogenase (Complex I) which catalyzes electron transfer from NADH through the respiratory chain, using ubiquinone as an electron acceptor. Essential for the catalytic activity of complex I. This Pongo abelii (Sumatran orangutan) protein is NADH-ubiquinone oxidoreductase chain 3.